A 61-amino-acid chain; its full sequence is UPF0434 protein Nmul_A1027 (61 aa).

Belongs to the UPF0434 family.

In Nitrosospira multiformis (strain ATCC 25196 / NCIMB 11849 / C 71), this protein is UPF0434 protein Nmul_A1027.